Here is a 10746-residue protein sequence, read N- to C-terminus: Extracellular matrix-binding protein ebh (10746 aa).

Residues 1–39 (MNYRDKIQKFSIRKYTVGTFSTVIATLVFLGLNTSQAQA) form the signal peptide. Composition is skewed to polar residues over residues 41 to 59 (ETNQPASALKQKQQNGDTQ) and 67 to 113 (VQNS…SQNE). Disordered stretches follow at residues 41–174 (ETNQ…GNVQ), 246–274 (MPQRQQTSRRSSRIQTRSIESRAAEPRSV), and 1340–1372 (IAGNEKAQAEAGGRPNYKTTGYSQSNPTSDGQR). The span at 120-130 (AAATPTQSAKA) shows a compositional bias: low complexity. A compositionally biased stretch (basic and acidic residues) spans 132-158 (SKHEQSESRAANKKENDNKATHVESHE). Residues 162–173 (VTASDSSDSGNV) are compositionally biased toward polar residues. Over residues 248 to 263 (QRQQTSRRSSRIQTRS) the composition is skewed to low complexity. Polar residues predominate over residues 1356 to 1372 (YKTTGYSQSNPTSDGQR). FIVAR domains lie at 2520 to 2576 (AKNH…VNAA), 2606 to 2662 (SKNN…ISDE), 2683 to 2746 (DTHE…VQTA), 2776 to 2832 (AKTK…IAAK), 2860 to 2915 (AKTQ…IRQN), 2943 to 2998 (AKNQ…INTN), 3026 to 3081 (AKTQ…INDK), 3150 to 3208 (AMTK…VNQK), 3276 to 3335 (AMTG…VNNA), 3403 to 3461 (AMGN…VNSA), 3529 to 3587 (AMGN…VTEA), 3655 to 3713 (AMNT…ITQK), 3781 to 3839 (AMAS…VEAA), 3907 to 3965 (AMGN…VEQA), 4033 to 4091 (AMGQ…VTAA), 4159 to 4217 (AMKG…ITQA), 4285 to 4343 (QMGN…VEAA), 4411 to 4469 (AMAN…VENA), 4537 to 4595 (AMGT…INQI), 4663 to 4721 (AMGQ…VDRA), 4789 to 4847 (AMNS…VDNA), 4915 to 4973 (AMGA…INGM), 5041 to 5099 (AMTV…VNSA), 5167 to 5225 (AMKG…ITQA), 5293 to 5351 (AMHS…VEQA), 5419 to 5477 (AMGQ…VERA), 5545 to 5603 (AMTA…VTNA), 5671 to 5729 (AMKG…INQA), 5797 to 5855 (AMTN…VESA), 5923 to 5981 (AMSN…VEQA), 6049 to 6107 (AMNQ…INQK), 6175 to 6232 (AMGN…VQAA), 6300 to 6358 (AMGQ…VEAA), 6426 to 6484 (AMQR…VEQA), 6552 to 6610 (AMDQ…VTAA), 6678 to 6736 (AMNQ…VTQA), 6804 to 6862 (AMER…VEAA), 6930 to 6988 (AMGN…VEAA), 7056 to 7114 (AMDK…INQA), 7182 to 7240 (AMGN…VEQA), 7308 to 7366 (AMTQ…ITAA), 7434 to 7492 (AMTQ…IQQA), 7560 to 7618 (AMTN…VEQA), 7686 to 7744 (AMTQ…VAQA), 7812 to 7870 (AMGT…VTQA), 7938 to 7996 (AMSN…ITRA), 8064 to 8125 (AMDQ…ITNE), 8190 to 8251 (AMDQ…ITNE), 8316 to 8374 (AMEL…VNRA), 8442 to 8500 (AMGN…VEQA), 8568 to 8625 (AMHG…INQA), 8693 to 8751 (LMDA…VTSA), 8819 to 8877 (AMKA…IDQA), 8945 to 9003 (AMEA…VEQL), 9071 to 9129 (AMQA…VEQL), 9197 to 9255 (AMET…VDQA), 9323 to 9377 (SMDQ…VDQA), 9445 to 9504 (VMDQ…VIKL), and 9699 to 9755 (AMET…INGA). Positions 7066–7080 (DNATTKQNQNYTDSS) are enriched in polar residues. The disordered stretch occupies residues 7066–7085 (DNATTKQNQNYTDSSPNKKD). Polar residues predominate over residues 10492–10507 (DHSKPSSNSDGQSNSH). The tract at residues 10492 to 10530 (DHSKPSSNSDGQSNSHLHVGYGTVNHPFNSSPIGHKKKL) is disordered. A helical membrane pass occupies residues 10552-10572 (IKNALGVVGISGLLASFWFFI). A disordered region spans residues 10649–10746 (RRKEDEEDVE…KKKKSKKNKK (98 aa)). A compositionally biased stretch (basic and acidic residues) spans 10664 to 10674 (TDEKVLQDNEH). Positions 10719–10746 (KGKKSASKKPSKKVAAKKKKKKSKKNKK) are enriched in basic residues.

It localises to the cell membrane. This chain is Extracellular matrix-binding protein ebh (ebh), found in Staphylococcus aureus (strain MRSA252).